Reading from the N-terminus, the 189-residue chain is Probable transcriptional regulator Rv1176c (189 aa).

This sequence belongs to the PadR family. As to quaternary structure, homodimer.

It is found in the cytoplasm. Its function is as follows. Probable transcriptional regulator that may help mitigate the effect of oxidative stress and help mycobacteria survive inside macrophages. Binds to its own promoter region. The polypeptide is Probable transcriptional regulator Rv1176c (Mycobacterium tuberculosis (strain ATCC 25618 / H37Rv)).